A 172-amino-acid polypeptide reads, in one-letter code: ATP synthase subunit b (172 aa).

A helical transmembrane segment spans residues 11 to 30; sequence LIAQIINFVIVLWVLNRFAF.

This sequence belongs to the ATPase B chain family. As to quaternary structure, F-type ATPases have 2 components, F(1) - the catalytic core - and F(0) - the membrane proton channel. F(1) has five subunits: alpha(3), beta(3), gamma(1), delta(1), epsilon(1). F(0) has three main subunits: a(1), b(2) and c(10-14). The alpha and beta chains form an alternating ring which encloses part of the gamma chain. F(1) is attached to F(0) by a central stalk formed by the gamma and epsilon chains, while a peripheral stalk is formed by the delta and b chains.

It is found in the cell inner membrane. Its function is as follows. F(1)F(0) ATP synthase produces ATP from ADP in the presence of a proton or sodium gradient. F-type ATPases consist of two structural domains, F(1) containing the extramembraneous catalytic core and F(0) containing the membrane proton channel, linked together by a central stalk and a peripheral stalk. During catalysis, ATP synthesis in the catalytic domain of F(1) is coupled via a rotary mechanism of the central stalk subunits to proton translocation. Functionally, component of the F(0) channel, it forms part of the peripheral stalk, linking F(1) to F(0). The protein is ATP synthase subunit b of Methylacidiphilum infernorum (isolate V4) (Methylokorus infernorum (strain V4)).